The chain runs to 1105 residues: ATP-dependent DNA helicase MPH1 (1105 aa).

One can recognise a Helicase ATP-binding domain in the interval 94–261 (IVQRAFYDNL…EIIDNLSISK (168 aa)). 107 to 114 (LPTGLGKT) lines the ATP pocket. The short motif at 209-212 (DEAH) is the DEAH box element. The 174-residue stretch at 468–641 (SIERIGSNLR…LITLAQSNRI (174 aa)) folds into the Helicase C-terminal domain. Disordered regions lie at residues 493-534 (EEAY…AQIK), 684-708 (KGKKVTKSKSKSKSNSKSKKIEKRF), 758-824 (IQSK…PKLG), 850-880 (LVTGKSTSPPENVAEKRNSPILNSSNRECAP), and 918-953 (VSDDEKSVEDSINNQQLHKNKNLGSTSDDDDAFDEG). Basic residues predominate over residues 499-511 (KGKKGRTKGKATK). Positions 518-532 (TPERSTSRTSSEDAQ) are enriched in basic and acidic residues. Residues 684–705 (KGKKVTKSKSKSKSNSKSKKIE) are compositionally biased toward basic residues. The segment covering 764 to 787 (PVKENQSKRPNSEHICEEDSRQET) has biased composition (basic and acidic residues). Low complexity predominate over residues 788 to 799 (ENNSNESNGSFE). Over residues 927-943 (DSINNQQLHKNKNLGST) the composition is skewed to polar residues. The span at 944–953 (SDDDDAFDEG) shows a compositional bias: acidic residues.

This sequence belongs to the DEAD box helicase family. DEAH subfamily. FANCM sub-subfamily. As to quaternary structure, interacts with the MHF histone-fold complex to form the FANCM-MHF complex.

The protein resides in the nucleus. It catalyses the reaction ATP + H2O = ADP + phosphate + H(+). In terms of biological role, ATP-dependent DNA helicase involved in DNA damage repair by homologous recombination and in genome maintenance. Capable of unwinding D-loops. Plays a role in limiting crossover recombinants during mitotic DNA double-strand break (DSB) repair. Component of a FANCM-MHF complex which promotes gene conversion at blocked replication forks, probably by reversal of the stalled fork. The sequence is that of ATP-dependent DNA helicase MPH1 from Debaryomyces hansenii (strain ATCC 36239 / CBS 767 / BCRC 21394 / JCM 1990 / NBRC 0083 / IGC 2968) (Yeast).